Here is a 427-residue protein sequence, read N- to C-terminus: 3-phosphoshikimate 1-carboxyvinyltransferase (427 aa).

3 residues coordinate 3-phosphoshikimate: Lys22, Ser23, and Arg27. Lys22 contacts phosphoenolpyruvate. Phosphoenolpyruvate contacts are provided by Gly96 and Arg124. 3-phosphoshikimate contacts are provided by Ser170, Ser171, Gln172, Ser198, Asp314, Asn337, and Lys341. Gln172 is a binding site for phosphoenolpyruvate. Asp314 functions as the Proton acceptor in the catalytic mechanism. Phosphoenolpyruvate contacts are provided by Arg345, Arg387, and Lys412.

Belongs to the EPSP synthase family. Monomer.

The protein localises to the cytoplasm. The catalysed reaction is 3-phosphoshikimate + phosphoenolpyruvate = 5-O-(1-carboxyvinyl)-3-phosphoshikimate + phosphate. It participates in metabolic intermediate biosynthesis; chorismate biosynthesis; chorismate from D-erythrose 4-phosphate and phosphoenolpyruvate: step 6/7. Functionally, catalyzes the transfer of the enolpyruvyl moiety of phosphoenolpyruvate (PEP) to the 5-hydroxyl of shikimate-3-phosphate (S3P) to produce enolpyruvyl shikimate-3-phosphate and inorganic phosphate. This Tolumonas auensis (strain DSM 9187 / NBRC 110442 / TA 4) protein is 3-phosphoshikimate 1-carboxyvinyltransferase.